Consider the following 349-residue polypeptide: Heat-inducible transcription repressor HrcA (349 aa).

Belongs to the HrcA family.

Negative regulator of class I heat shock genes (grpE-dnaK-dnaJ and groELS operons). Prevents heat-shock induction of these operons. This is Heat-inducible transcription repressor HrcA from Lactobacillus acidophilus (strain ATCC 700396 / NCK56 / N2 / NCFM).